A 445-amino-acid polypeptide reads, in one-letter code: Glutamyl-tRNA reductase (445 aa).

Substrate contacts are provided by residues 49–52, S109, 114–116, and Q120; these read TCNR and ETQ. C50 functions as the Nucleophile in the catalytic mechanism. 189–194 lines the NADP(+) pocket; sequence GAGEMS.

Belongs to the glutamyl-tRNA reductase family. In terms of assembly, homodimer.

It catalyses the reaction (S)-4-amino-5-oxopentanoate + tRNA(Glu) + NADP(+) = L-glutamyl-tRNA(Glu) + NADPH + H(+). It functions in the pathway porphyrin-containing compound metabolism; protoporphyrin-IX biosynthesis; 5-aminolevulinate from L-glutamyl-tRNA(Glu): step 1/2. In terms of biological role, catalyzes the NADPH-dependent reduction of glutamyl-tRNA(Glu) to glutamate 1-semialdehyde (GSA). The protein is Glutamyl-tRNA reductase of Staphylococcus carnosus (strain TM300).